Consider the following 309-residue polypeptide: ADP-L-glycero-D-manno-heptose-6-epimerase (309 aa).

NADP(+) contacts are provided by residues 10 to 11 (MI), 31 to 32 (DN), Lys38, Lys53, 75 to 79 (EGACS), and Asn92. Tyr139 serves as the catalytic Proton acceptor. Lys143 contacts NADP(+). Asn168 is a binding site for substrate. Residues Val169 and Lys177 each contribute to the NADP(+) site. The Proton acceptor role is filled by Lys177. Residues Ser179, His186, 200–203 (FDGS), Arg208, and Tyr271 each bind substrate.

Belongs to the NAD(P)-dependent epimerase/dehydratase family. HldD subfamily. As to quaternary structure, homopentamer. NADP(+) serves as cofactor.

The catalysed reaction is ADP-D-glycero-beta-D-manno-heptose = ADP-L-glycero-beta-D-manno-heptose. The protein operates within nucleotide-sugar biosynthesis; ADP-L-glycero-beta-D-manno-heptose biosynthesis; ADP-L-glycero-beta-D-manno-heptose from D-glycero-beta-D-manno-heptose 7-phosphate: step 4/4. In terms of biological role, catalyzes the interconversion between ADP-D-glycero-beta-D-manno-heptose and ADP-L-glycero-beta-D-manno-heptose via an epimerization at carbon 6 of the heptose. The polypeptide is ADP-L-glycero-D-manno-heptose-6-epimerase (Serratia proteamaculans (strain 568)).